A 278-amino-acid polypeptide reads, in one-letter code: Large ribosomal subunit protein uL2 (278 aa).

2 disordered regions span residues 1 to 59 (MAIR…GGHK) and 222 to 278 (RGAA…NKKR). Polar residues predominate over residues 16-27 (SSVSEFSEITRS). 2 stretches are compositionally biased toward basic residues: residues 45–59 (VHGHITTRHKGGGHK) and 269–278 (VRRRRPNKKR).

It belongs to the universal ribosomal protein uL2 family. As to quaternary structure, part of the 50S ribosomal subunit. Forms a bridge to the 30S subunit in the 70S ribosome.

One of the primary rRNA binding proteins. Required for association of the 30S and 50S subunits to form the 70S ribosome, for tRNA binding and peptide bond formation. It has been suggested to have peptidyltransferase activity; this is somewhat controversial. Makes several contacts with the 16S rRNA in the 70S ribosome. This chain is Large ribosomal subunit protein uL2, found in Corynebacterium urealyticum (strain ATCC 43042 / DSM 7109).